Reading from the N-terminus, the 129-residue chain is MARGSLRRLLRLLVLGLWLALLRSVAGEQAPGTAPCSRGSSWSADLDKCMDCASCRARPHSDFCLGCAAAPPAPFRLLWPILGGALSLTFVLGLLSGFLVWRRCRRREKFTTPIEETGGEGCPAVALIQ.

The N-terminal stretch at M1–G27 is a signal peptide. Residues E28 to P80 are Extracellular-facing. 3 disulfide bridges follow: C36–C49, C52–C67, and C55–C64. The TNFR-Cys; atypical repeat unit spans residues C36–C67. A helical transmembrane segment spans residues I81 to W101. The Cytoplasmic segment spans residues R102–Q129.

Associates with TRAF1 and TRAF2, and probably also with TRAF3. In terms of tissue distribution, highly expressed in heart, placenta and kidney. Intermediate expression in lung, skeletal muscle and pancreas.

The protein resides in the membrane. In terms of biological role, receptor for TNFSF12/TWEAK. Weak inducer of apoptosis in some cell types. Promotes angiogenesis and the proliferation of endothelial cells. May modulate cellular adhesion to matrix proteins. The polypeptide is Tumor necrosis factor receptor superfamily member 12A (TNFRSF12A) (Homo sapiens (Human)).